The chain runs to 475 residues: MMERIRKEMILMERGLHSPTAGKRFSSLSDSAGGAVLEALENSQHPARLSPRLPSAPLHGALGDLPAKGKFEIDTLFNLQHPSSESTVSSEIASATESRKKPSHYSEAAAEADMSSDVEVGCSALRSPSGLGAAPLKENNAKGYTESGSVAGTTTSASGSGLGSLHGGGGGGNSGAAALGGSGSGSGADQVRRYRTAFTREQIARLEKEFYRENYVSRPRRCELAAALNLPETTIKVWFQNRRMKDKRQRLAMSWPHPADPSFYTYMMTHAAATGSLPYPFHSHVPLHYYPHVGVTAAAAAAAASGAAAAASSPFATSIRPLDTFRALSHPYSRPELLCSFRHPGLYQAPAAAAGLNSAASAAAAAAAAAAAASSAAAAGAPPSGSSAPCSCLSCHSSQSAAAAAAAAAAALGSRGGGGSGGGGGGGAGTAGGSDFGCSAAAPRSESGFLPYSAAVLSKTAVSPPDQRDEAPLTR.

Disordered regions lie at residues 82-113 (PSSE…AEAD) and 155-189 (TSAS…SGAD). Residues 83 to 96 (SSESTVSSEIASAT) are compositionally biased toward low complexity. The span at 160–186 (SGLGSLHGGGGGGNSGAAALGGSGSGS) shows a compositional bias: gly residues. A DNA-binding region (homeobox) is located at residues 191–250 (VRRYRTAFTREQIARLEKEFYRENYVSRPRRCELAAALNLPETTIKVWFQNRRMKDKRQR).

This sequence belongs to the even-skipped homeobox family.

The protein localises to the nucleus. In Mus musculus (Mouse), this protein is Homeobox even-skipped homolog protein 2 (Evx2).